Reading from the N-terminus, the 69-residue chain is Bowman-Birk type proteinase inhibitor A2 (69 aa).

Disulfide bonds link Cys-12/Cys-31, Cys-18/Cys-29, Cys-38/Cys-45, and Cys-42/Cys-59.

This sequence belongs to the Bowman-Birk serine protease inhibitor family. As to expression, expressed in bulb (at protein level).

Serine protease inhibitor. This Hyacinthus orientalis (Common hyacinth) protein is Bowman-Birk type proteinase inhibitor A2.